We begin with the raw amino-acid sequence, 215 residues long: MNKYLEYPEVESNRQPAKKLVVLLHGVGSDGHDLIGLVPYIKNDLPDCHFISPHGIEAYDMMPYGRQWFSLQDRSPHIIAKLIANNISKLEDIIKQKQEELNLTNKDTIIIGFSQGTMIGLYLTLIQREPFFCTIGFSGALIPPMEVNNKLTPICLIHGELDEVVGVSEMYNASNYLSKLHIEHSGHKLTSLAHSIDGRGLEIAINFINTCHTVV.

Catalysis depends on charge relay system residues Ser-114, Asp-162, and His-194.

Belongs to the AB hydrolase superfamily. AB hydrolase 2 family.

This is an uncharacterized protein from Rickettsia felis (strain ATCC VR-1525 / URRWXCal2) (Rickettsia azadi).